We begin with the raw amino-acid sequence, 106 residues long: UPF0091 protein RC0354 (106 aa).

It belongs to the UPF0091 family.

The sequence is that of UPF0091 protein RC0354 from Rickettsia conorii (strain ATCC VR-613 / Malish 7).